Here is a 360-residue protein sequence, read N- to C-terminus: Biotin synthase (360 aa).

The segment at 1–21 is disordered; that stretch reads MTQLNIAPASTDTAAASNNNA. In terms of domain architecture, Radical SAM core spans 62-289; that stretch reads NTVQLSTLLS…RAMVRLSAGR (228 aa). Positions 77, 81, and 84 each coordinate [4Fe-4S] cluster. Cysteine 121, cysteine 152, cysteine 212, and arginine 284 together coordinate [2Fe-2S] cluster.

Belongs to the radical SAM superfamily. Biotin synthase family. Homodimer. Requires [4Fe-4S] cluster as cofactor. It depends on [2Fe-2S] cluster as a cofactor.

It carries out the reaction (4R,5S)-dethiobiotin + (sulfur carrier)-SH + 2 reduced [2Fe-2S]-[ferredoxin] + 2 S-adenosyl-L-methionine = (sulfur carrier)-H + biotin + 2 5'-deoxyadenosine + 2 L-methionine + 2 oxidized [2Fe-2S]-[ferredoxin]. It functions in the pathway cofactor biosynthesis; biotin biosynthesis; biotin from 7,8-diaminononanoate: step 2/2. Functionally, catalyzes the conversion of dethiobiotin (DTB) to biotin by the insertion of a sulfur atom into dethiobiotin via a radical-based mechanism. The protein is Biotin synthase of Paraburkholderia xenovorans (strain LB400).